Here is a 101-residue protein sequence, read N- to C-terminus: uncharacterized protein (101 aa).

The chain crosses the membrane as a helical span at residues 13-33 (FISIMCLFSIPLCFSLSIFFF).

The protein localises to the membrane. This is an uncharacterized protein from Schizosaccharomyces pombe (strain 972 / ATCC 24843) (Fission yeast).